The sequence spans 585 residues: Glutamate decarboxylase 2 (585 aa).

Residues 1–25 (MASPGSGFWSFGSEDGSGDPENPST) form a disordered region. Phosphoserine is present on residues Ser3, Ser6, Ser10, and Ser13. S-palmitoyl cysteine attachment occurs at residues Cys30 and Cys45. Substrate is bound at residue 181–183 (QLS). N6-(pyridoxal phosphate)lysine is present on Lys396. Position 558 (Arg558) interacts with substrate.

This sequence belongs to the group II decarboxylase family. In terms of assembly, homodimer. Pyridoxal 5'-phosphate serves as cofactor. In terms of processing, phosphorylated; which does not affect kinetic parameters or subcellular location. Post-translationally, palmitoylated; which is required for presynaptic clustering.

It localises to the cytoplasm. It is found in the cytosol. The protein localises to the cytoplasmic vesicle. The protein resides in the presynaptic cell membrane. Its subcellular location is the golgi apparatus membrane. The catalysed reaction is L-glutamate + H(+) = 4-aminobutanoate + CO2. In terms of biological role, catalyzes the production of GABA. The polypeptide is Glutamate decarboxylase 2 (GAD2) (Canis lupus familiaris (Dog)).